Here is a 206-residue protein sequence, read N- to C-terminus: MSAVRSKICGITRIEDALAAAEAGADAIGLVFYPKSPRAVTVLQARAIIAALPPFITTVGLFVNASRCELNETLDAVALDMLQFHGDETPEECDGYHRPYIKALRVKAGDDIAQACRTYRNARGVLLDTYVEGVPGGTGETFDWALIPDDLDKPVILAGGLTSANVAQAIAQVRPYAVDVSGGVEKSKGIKDREKILAFMSAVHGT.

It belongs to the TrpF family.

The catalysed reaction is N-(5-phospho-beta-D-ribosyl)anthranilate = 1-(2-carboxyphenylamino)-1-deoxy-D-ribulose 5-phosphate. Its pathway is amino-acid biosynthesis; L-tryptophan biosynthesis; L-tryptophan from chorismate: step 3/5. The protein is N-(5'-phosphoribosyl)anthranilate isomerase of Pseudomonas syringae pv. tomato (strain ATCC BAA-871 / DC3000).